Reading from the N-terminus, the 525-residue chain is AP-4 complex accessory subunit Tepsin (525 aa).

The ENTH domain occupies R8 to P141. Positions L139–G229 are disordered. A compositionally biased stretch (low complexity) spans S193 to S225. A phosphoserine mark is found at S333 and S356. The interval L355–W465 is disordered. Residues P393–S412 are compositionally biased toward low complexity. The segment covering S413–G429 has biased composition (pro residues). A compositionally biased stretch (basic and acidic residues) spans A434–R448. The interaction with AP4B1 stretch occupies residues R467–V477. The segment at A487–A525 is disordered. Positions S515–A525 are interaction with AP4E1.

In terms of assembly, interacts with AP4B1 and AP4E1; the interaction is direct and mediates the association of TEPSIN with the adapter-like complex 4 (AP-4), a heterotetramer composed of AP4B1, AP4E1, AP4M1 and AP4S1.

The protein resides in the golgi apparatus. It is found in the trans-Golgi network membrane. Its subcellular location is the cytoplasmic vesicle. The protein localises to the cytoplasm. It localises to the cytosol. Associates with the adapter-like complex 4 (AP-4) and may therefore play a role in vesicular trafficking of proteins at the trans-Golgi network. The protein is AP-4 complex accessory subunit Tepsin of Homo sapiens (Human).